The primary structure comprises 72 residues: Translation initiation factor IF-1 (72 aa).

An S1-like domain is found at 1-72 (MSKEDVIEVE…SRGRIVYRFK (72 aa)).

It belongs to the IF-1 family. Component of the 30S ribosomal translation pre-initiation complex which assembles on the 30S ribosome in the order IF-2 and IF-3, IF-1 and N-formylmethionyl-tRNA(fMet); mRNA recruitment can occur at any time during PIC assembly.

It is found in the cytoplasm. One of the essential components for the initiation of protein synthesis. Stabilizes the binding of IF-2 and IF-3 on the 30S subunit to which N-formylmethionyl-tRNA(fMet) subsequently binds. Helps modulate mRNA selection, yielding the 30S pre-initiation complex (PIC). Upon addition of the 50S ribosomal subunit IF-1, IF-2 and IF-3 are released leaving the mature 70S translation initiation complex. This chain is Translation initiation factor IF-1, found in Desulfitobacterium hafniense (strain Y51).